A 227-amino-acid chain; its full sequence is DNA packaging ATPase P9 (227 aa).

16-23 (GKTGTGKT) is an ATP binding site.

In terms of assembly, heterodimer of P6 and P9; further multimerizes as hexamers of heterodimers. Part of the dodecameric portal complex that is composed of the packaging efficiency factor P6, the DNA packaging ATPase P9, and the internal heterododecamer P20/P22 which spans the virion inner membrane.

The protein resides in the virion. Functionally, together with the packaging efficiency factor P6, forms the external part of the portal vertex that is embeded in the capsid and which plays critical roles in genome packaging and genome ejection. Both proteins multimerize as a single ring-shaped heterdodecamer arranged around a central channel. The protein is DNA packaging ATPase P9 (IX) of Enterobacteria phage PRD1 (Bacteriophage PRD1).